A 347-amino-acid polypeptide reads, in one-letter code: MAAAIRHDWQHDELQALFDLPFPELLFRAAAVHREHFDPAQVQVSTLLSVKTGGCPEDCAYCPQAQRYNTGVNAQKLMETDAVLAKARQAKAAGASRFCMGAAWRSPKDRDIPKVAAMIAGVKALGLETCATLGMLSGGQARALKDAGLDYYNHNLDTAPDYYDSIIHTRQYQDRLDTLEHVRDAGLKTCCGGIVGMGETRAQRVGLLLALATLPAHPDSVPINKLVQVAGTPLHGSAELDPFEFVRMIAVARIVMPRSMVRLSAGREAMSDELQALCFVAGANSIFYGDKLLTTGNPESERDLALFARLGLQPMAVQVDAEGHDHGGTVHADISADAPGCGCAHAA.

In terms of domain architecture, Radical SAM core spans 40-258; that stretch reads AQVQVSTLLS…IAVARIVMPR (219 aa). Positions 55, 59, and 62 each coordinate [4Fe-4S] cluster. 4 residues coordinate [2Fe-2S] cluster: C99, C130, C190, and R262.

This sequence belongs to the radical SAM superfamily. Biotin synthase family. Homodimer. [4Fe-4S] cluster is required as a cofactor. It depends on [2Fe-2S] cluster as a cofactor.

The enzyme catalyses (4R,5S)-dethiobiotin + (sulfur carrier)-SH + 2 reduced [2Fe-2S]-[ferredoxin] + 2 S-adenosyl-L-methionine = (sulfur carrier)-H + biotin + 2 5'-deoxyadenosine + 2 L-methionine + 2 oxidized [2Fe-2S]-[ferredoxin]. It participates in cofactor biosynthesis; biotin biosynthesis; biotin from 7,8-diaminononanoate: step 2/2. Functionally, catalyzes the conversion of dethiobiotin (DTB) to biotin by the insertion of a sulfur atom into dethiobiotin via a radical-based mechanism. The chain is Biotin synthase from Stenotrophomonas maltophilia (strain R551-3).